The sequence spans 444 residues: tRNA-2-methylthio-N(6)-dimethylallyladenosine synthase (444 aa).

An MTTase N-terminal domain is found at 8–122 (KTFYIETFGC…LAEMLVQIES (115 aa)). Residues C17, C53, C85, C160, C164, and C167 each coordinate [4Fe-4S] cluster. One can recognise a Radical SAM core domain in the interval 146 to 376 (RGNAHRGYIT…MEHQREIQRA (231 aa)). One can recognise a TRAM domain in the interval 379 to 444 (RKHIGETIEV…PNSLVGELVG (66 aa)).

Belongs to the methylthiotransferase family. MiaB subfamily. In terms of assembly, monomer. [4Fe-4S] cluster is required as a cofactor.

The protein localises to the cytoplasm. It catalyses the reaction N(6)-dimethylallyladenosine(37) in tRNA + (sulfur carrier)-SH + AH2 + 2 S-adenosyl-L-methionine = 2-methylsulfanyl-N(6)-dimethylallyladenosine(37) in tRNA + (sulfur carrier)-H + 5'-deoxyadenosine + L-methionine + A + S-adenosyl-L-homocysteine + 2 H(+). Functionally, catalyzes the methylthiolation of N6-(dimethylallyl)adenosine (i(6)A), leading to the formation of 2-methylthio-N6-(dimethylallyl)adenosine (ms(2)i(6)A) at position 37 in tRNAs that read codons beginning with uridine. This chain is tRNA-2-methylthio-N(6)-dimethylallyladenosine synthase, found in Koribacter versatilis (strain Ellin345).